We begin with the raw amino-acid sequence, 141 residues long: Large ribosomal subunit protein uL11 (141 aa).

Belongs to the universal ribosomal protein uL11 family. As to quaternary structure, part of the ribosomal stalk of the 50S ribosomal subunit. Interacts with L10 and the large rRNA to form the base of the stalk. L10 forms an elongated spine to which L12 dimers bind in a sequential fashion forming a multimeric L10(L12)X complex. In terms of processing, one or more lysine residues are methylated.

Forms part of the ribosomal stalk which helps the ribosome interact with GTP-bound translation factors. This chain is Large ribosomal subunit protein uL11, found in Streptococcus suis (strain 98HAH33).